A 251-amino-acid chain; its full sequence is Phosphoribosylaminoimidazole-succinocarboxamide synthase (251 aa).

The protein belongs to the SAICAR synthetase family.

It carries out the reaction 5-amino-1-(5-phospho-D-ribosyl)imidazole-4-carboxylate + L-aspartate + ATP = (2S)-2-[5-amino-1-(5-phospho-beta-D-ribosyl)imidazole-4-carboxamido]succinate + ADP + phosphate + 2 H(+). It participates in purine metabolism; IMP biosynthesis via de novo pathway; 5-amino-1-(5-phospho-D-ribosyl)imidazole-4-carboxamide from 5-amino-1-(5-phospho-D-ribosyl)imidazole-4-carboxylate: step 1/2. This Phenylobacterium zucineum (strain HLK1) protein is Phosphoribosylaminoimidazole-succinocarboxamide synthase.